Here is a 227-residue protein sequence, read N- to C-terminus: Cytochrome c oxidase subunit 2 (227 aa).

Residues 1–14 (MAHAAQVGLQDATS) lie on the Mitochondrial intermembrane side of the membrane. Residues 15–45 (PIMEELIIFHDHALMIIFLICFLVLYALFLT) traverse the membrane as a helical segment. At 46–59 (LTTKLTNTSISDAQ) the chain is on the mitochondrial matrix side. The helical transmembrane segment at 60-87 (EMETVWTILPAIILVLIALPSLRILYMT) threads the bilayer. The Mitochondrial intermembrane segment spans residues 88-227 (DEVNDPSFTI…IFEMGPVFTL (140 aa)). H161, C196, E198, C200, H204, and M207 together coordinate Cu cation. E198 contributes to the Mg(2+) binding site.

It belongs to the cytochrome c oxidase subunit 2 family. As to quaternary structure, component of the cytochrome c oxidase (complex IV, CIV), a multisubunit enzyme composed of 14 subunits. The complex is composed of a catalytic core of 3 subunits MT-CO1, MT-CO2 and MT-CO3, encoded in the mitochondrial DNA, and 11 supernumerary subunits COX4I, COX5A, COX5B, COX6A, COX6B, COX6C, COX7A, COX7B, COX7C, COX8 and NDUFA4, which are encoded in the nuclear genome. The complex exists as a monomer or a dimer and forms supercomplexes (SCs) in the inner mitochondrial membrane with NADH-ubiquinone oxidoreductase (complex I, CI) and ubiquinol-cytochrome c oxidoreductase (cytochrome b-c1 complex, complex III, CIII), resulting in different assemblies (supercomplex SCI(1)III(2)IV(1) and megacomplex MCI(2)III(2)IV(2)). Found in a complex with TMEM177, COA6, COX18, COX20, SCO1 and SCO2. Interacts with TMEM177 in a COX20-dependent manner. Interacts with COX20. Interacts with COX16. Cu cation serves as cofactor.

The protein localises to the mitochondrion inner membrane. The catalysed reaction is 4 Fe(II)-[cytochrome c] + O2 + 8 H(+)(in) = 4 Fe(III)-[cytochrome c] + 2 H2O + 4 H(+)(out). Its function is as follows. Component of the cytochrome c oxidase, the last enzyme in the mitochondrial electron transport chain which drives oxidative phosphorylation. The respiratory chain contains 3 multisubunit complexes succinate dehydrogenase (complex II, CII), ubiquinol-cytochrome c oxidoreductase (cytochrome b-c1 complex, complex III, CIII) and cytochrome c oxidase (complex IV, CIV), that cooperate to transfer electrons derived from NADH and succinate to molecular oxygen, creating an electrochemical gradient over the inner membrane that drives transmembrane transport and the ATP synthase. Cytochrome c oxidase is the component of the respiratory chain that catalyzes the reduction of oxygen to water. Electrons originating from reduced cytochrome c in the intermembrane space (IMS) are transferred via the dinuclear copper A center (CU(A)) of subunit 2 and heme A of subunit 1 to the active site in subunit 1, a binuclear center (BNC) formed by heme A3 and copper B (CU(B)). The BNC reduces molecular oxygen to 2 water molecules using 4 electrons from cytochrome c in the IMS and 4 protons from the mitochondrial matrix. This Pan paniscus (Pygmy chimpanzee) protein is Cytochrome c oxidase subunit 2 (MT-CO2).